Reading from the N-terminus, the 310-residue chain is Homoserine kinase (310 aa).

91-101 (PIGSGLGSSAC) is a binding site for ATP.

It belongs to the GHMP kinase family. Homoserine kinase subfamily.

The protein localises to the cytoplasm. The enzyme catalyses L-homoserine + ATP = O-phospho-L-homoserine + ADP + H(+). Its pathway is amino-acid biosynthesis; L-threonine biosynthesis; L-threonine from L-aspartate: step 4/5. In terms of biological role, catalyzes the ATP-dependent phosphorylation of L-homoserine to L-homoserine phosphate. The polypeptide is Homoserine kinase (Shigella sonnei (strain Ss046)).